A 282-amino-acid chain; its full sequence is Parvulin-like PPIase (282 aa).

The first 20 residues, 1 to 20 (MKKLSVIFLSVSMLSSIAFC), serve as a signal peptide directing secretion. The region spanning 138-231 (KEQIKVAHIL…FGWHIIKVLE (94 aa)) is the PpiC domain.

The protein belongs to the PpiC/parvulin rotamase family.

It is found in the cell outer membrane. The catalysed reaction is [protein]-peptidylproline (omega=180) = [protein]-peptidylproline (omega=0). The protein is Parvulin-like PPIase (plp) of Rickettsia typhi (strain ATCC VR-144 / Wilmington).